A 55-amino-acid chain; its full sequence is uncharacterized protein (55 aa).

The next 2 membrane-spanning stretches (helical) occupy residues 5–25 and 26–46; these read LISIVCIAVFFCLNILGMMHM and LPLYITSPLLFLSILFTLYRL.

The protein localises to the cell membrane. This is an uncharacterized protein from Bacillus subtilis (strain 168).